The chain runs to 491 residues: Glutamate--tRNA ligase (491 aa).

The 'HIGH' region motif lies at 13-23; the sequence is PSPTGFLHIGN. C110, C112, C137, and H139 together coordinate Zn(2+). The 'KMSKS' region signature appears at 254-258; that stretch reads KLSKR. K257 provides a ligand contact to ATP.

It belongs to the class-I aminoacyl-tRNA synthetase family. Glutamate--tRNA ligase type 1 subfamily. In terms of assembly, monomer. Requires Zn(2+) as cofactor.

Its subcellular location is the cytoplasm. It catalyses the reaction tRNA(Glu) + L-glutamate + ATP = L-glutamyl-tRNA(Glu) + AMP + diphosphate. Catalyzes the attachment of glutamate to tRNA(Glu) in a two-step reaction: glutamate is first activated by ATP to form Glu-AMP and then transferred to the acceptor end of tRNA(Glu). The sequence is that of Glutamate--tRNA ligase from Listeria monocytogenes serovar 1/2a (strain ATCC BAA-679 / EGD-e).